The primary structure comprises 403 residues: MADPKYADLPGIARNEPDVYETSDLPEDDQAEFDAEELTSTSVEHIIVNPNAAYDKFKDKKVGTRSLDFSDRITKSKRTGYESGEYEILGEGIGMKETPQQKYQRLLHEVQELTQEVEKTQSTVKESAAEEKLTPVALAKQVASLKQQLVSTHLEKLLGPDAAINLTDPDGALAKRLLTQLDAAKTRKNPEGKSPAKGPGPDTENLVTYELHCRPEQNKFSQAAKMAELEKRLGELEVAVRCDQDTQNPLTVGLQGSCLMDTVEILQAKVNLLDVASLDQVEARLQSVLGKMNEIAKHKAAIEDADTESKVHQLYETVQKWDSMSGTLPQVVQRLLTLKQLHEQAMQFGQLLTHLDTTQQMIANSLKDNTNALAMVQKAMKENLATVEDNFSNIDGRIKKLSK.

Residues Met1–Pro26 are disordered. A coiled-coil region spans residues Pro99–Lys132. A disordered region spans residues Ala183–Thr203. The stretch at Lys381 to Leu401 forms a coiled coil.

It belongs to the dynactin subunit 2 family. Subunit of dynactin, a multiprotein complex part of a tripartite complex with dynein and a adapter, such as BICDL1, BICD2 or HOOK3. The dynactin complex is built around ACTR1A/ACTB filament and consists of an actin-related filament composed of a shoulder domain, a pointed end and a barbed end. Its length is defined by its flexible shoulder domain. The soulder is composed of 2 DCTN1 subunits, 4 DCTN2 and 2 DCTN3.

It localises to the cytoplasm. The protein resides in the cytoskeleton. It is found in the microtubule organizing center. Its subcellular location is the centrosome. The protein localises to the membrane. Functionally, part of the dynactin complex that activates the molecular motor dynein for ultra-processive transport along microtubules. In the dynactin soulder domain, binds the ACTR1A filament and acts as a molecular ruler to determine the length. Modulates cytoplasmic dynein binding to an organelle, and plays a role in prometaphase chromosome alignment and spindle organization during mitosis. Involved in anchoring microtubules to centrosomes. This chain is Dynactin subunit 2-A (dctn2-a), found in Xenopus laevis (African clawed frog).